We begin with the raw amino-acid sequence, 179 residues long: ATP-dependent protease subunit HslV (179 aa).

Threonine 8 is an active-site residue. Serine 164, cysteine 167, and threonine 170 together coordinate Na(+).

The protein belongs to the peptidase T1B family. HslV subfamily. As to quaternary structure, a double ring-shaped homohexamer of HslV is capped on each side by a ring-shaped HslU homohexamer. The assembly of the HslU/HslV complex is dependent on binding of ATP.

Its subcellular location is the cytoplasm. The catalysed reaction is ATP-dependent cleavage of peptide bonds with broad specificity.. Its activity is regulated as follows. Allosterically activated by HslU binding. Protease subunit of a proteasome-like degradation complex believed to be a general protein degrading machinery. The chain is ATP-dependent protease subunit HslV from Staphylococcus carnosus (strain TM300).